The sequence spans 365 residues: uncharacterized protein (365 aa).

Disordered stretches follow at residues 119–157 (ERSRRLPTAPTSLSGQHRSLRLASKPEREVPLGAGQQES), 216–298 (RPPG…DISH), and 313–365 (SHHH…LSVG). Over residues 326–340 (SDPRIESRDLPERPQ) the composition is skewed to basic and acidic residues.

This is an uncharacterized protein from Homo sapiens (Human).